The primary structure comprises 398 residues: 1-deoxy-D-xylulose 5-phosphate reductoisomerase (398 aa).

NADPH is bound by residues T10, G11, S12, I13, G36, K37, N38, and N124. K125 contacts 1-deoxy-D-xylulose 5-phosphate. E126 is an NADPH binding site. D150 provides a ligand contact to Mn(2+). 1-deoxy-D-xylulose 5-phosphate contacts are provided by S151, E152, S186, and H209. Residue E152 coordinates Mn(2+). Residue G215 coordinates NADPH. Positions 222, 227, 228, and 231 each coordinate 1-deoxy-D-xylulose 5-phosphate. E231 contacts Mn(2+).

This sequence belongs to the DXR family. Homodimer. Mg(2+) is required as a cofactor. Requires Mn(2+) as cofactor.

The enzyme catalyses 2-C-methyl-D-erythritol 4-phosphate + NADP(+) = 1-deoxy-D-xylulose 5-phosphate + NADPH + H(+). The protein operates within isoprenoid biosynthesis; isopentenyl diphosphate biosynthesis via DXP pathway; isopentenyl diphosphate from 1-deoxy-D-xylulose 5-phosphate: step 1/6. Catalyzes the NADPH-dependent rearrangement and reduction of 1-deoxy-D-xylulose-5-phosphate (DXP) to 2-C-methyl-D-erythritol 4-phosphate (MEP). In Salmonella paratyphi A (strain ATCC 9150 / SARB42), this protein is 1-deoxy-D-xylulose 5-phosphate reductoisomerase.